Consider the following 393-residue polypeptide: Formate-dependent phosphoribosylglycinamide formyltransferase (393 aa).

N(1)-(5-phospho-beta-D-ribosyl)glycinamide-binding positions include 22–23 (EL) and Glu-82. ATP is bound by residues Arg-114, Lys-155, 160 to 165 (SSGKGQ), 195 to 198 (EGLV), and Glu-203. The 190-residue stretch at 119–308 (RLAAETLQLP…EFALHVRAFL (190 aa)) folds into the ATP-grasp domain. Positions 267 and 279 each coordinate Mg(2+). Residues Asp-286, Lys-355, and 362–363 (RR) contribute to the N(1)-(5-phospho-beta-D-ribosyl)glycinamide site.

It belongs to the PurK/PurT family. As to quaternary structure, homodimer.

It catalyses the reaction N(1)-(5-phospho-beta-D-ribosyl)glycinamide + formate + ATP = N(2)-formyl-N(1)-(5-phospho-beta-D-ribosyl)glycinamide + ADP + phosphate + H(+). It functions in the pathway purine metabolism; IMP biosynthesis via de novo pathway; N(2)-formyl-N(1)-(5-phospho-D-ribosyl)glycinamide from N(1)-(5-phospho-D-ribosyl)glycinamide (formate route): step 1/1. Functionally, involved in the de novo purine biosynthesis. Catalyzes the transfer of formate to 5-phospho-ribosyl-glycinamide (GAR), producing 5-phospho-ribosyl-N-formylglycinamide (FGAR). Formate is provided by PurU via hydrolysis of 10-formyl-tetrahydrofolate. The chain is Formate-dependent phosphoribosylglycinamide formyltransferase from Yersinia pseudotuberculosis serotype IB (strain PB1/+).